The sequence spans 302 residues: Transmembrane protein 191 (302 aa).

Positions 5–147 form a coiled coil; the sequence is QEQLLQLQKD…HLELAEAKFS (143 aa). The segment at 39 to 66 is disordered; the sequence is LTGRLEELRERERSLQRRRSQASRAIRG. Residues 42–53 show a composition bias toward basic and acidic residues; sequence RLEELRERERSL. Residues 242–262 traverse the membrane as a helical segment; that stretch reads LQTLLLLPLGFLVLPLIYVVL.

This sequence belongs to the TMEM191 family.

It is found in the membrane. The chain is Transmembrane protein 191 from Mus musculus (Mouse).